Reading from the N-terminus, the 62-residue chain is Synergistic-type venom protein C8S2, chain 2 (62 aa).

3 cysteine pairs are disulfide-bonded: Cys3–Cys24, Cys17–Cys42, and Cys46–Cys57.

It belongs to the three-finger toxin family. Short-chain subfamily. Aminergic toxin sub-subfamily. As to quaternary structure, heterodimer of C8S2 chain 1 (AC P01410) and chain 2; disulfide-linked. In terms of tissue distribution, expressed by the venom gland.

It localises to the secreted. This protein shows a synergetic toxic effect in that it enhances the toxicity of other toxins. This Dendroaspis angusticeps (Eastern green mamba) protein is Synergistic-type venom protein C8S2, chain 2.